Consider the following 722-residue polypeptide: Tegument protein UL46 (722 aa).

The interval 423-534 is disordered; sequence RLAASGPPGG…AAAARPLAAQ (112 aa). 2 stretches are compositionally biased toward basic and acidic residues: residues 440 to 451 and 474 to 491; these read CRDKIQRTRRDN and HRED…DRGP. Positions 510-522 are enriched in pro residues; sequence PRLPPRNPAPPEQ. Over residues 523 to 534 the composition is skewed to low complexity; the sequence is RPAAAARPLAAQ.

Belongs to the herpesviridae HHV-1 VP11/12 protein family. As to quaternary structure, interacts with VP16. Interacts with host LCK, PIK3R1, SHC1 AND GRB2; these interactions promote the activation of the PI3K/AKT pathway. Interacts with host YWHAB. Interacts with ICP0; this interaction targets UL46 for degradation by the proteasome. In terms of processing, phosphorylated by host LCK. The phosphorylation seems to be lymphocyte-specific.

Its subcellular location is the virion tegument. It localises to the host cell membrane. Its function is as follows. Plays a role in the activation of the host PI3K/AKT pathway to promote cell survival. Interacts with and activates host LCK and thereby recruits downstream partners SHC1, GRB2 and PI3KR1 in order to activate the PI3K pathway by phosphorylating host AKT on its activating residues. This mechanism is inhibited by the viral protein US3 that instead promotes incorporation of UL46 into virions. In Homo sapiens (Human), this protein is Tegument protein UL46.